The sequence spans 393 residues: Methylthioribose kinase (393 aa).

ATP contacts are provided by residues N38, K53, and 107–109 (EDL). Position 225 (D225) interacts with substrate. 242-244 (DPE) serves as a coordination point for ATP. R332 provides a ligand contact to substrate.

It belongs to the methylthioribose kinase family. As to quaternary structure, homodimer.

The enzyme catalyses 5-(methylsulfanyl)-D-ribose + ATP = 5-(methylsulfanyl)-alpha-D-ribose 1-phosphate + ADP + H(+). It participates in amino-acid biosynthesis; L-methionine biosynthesis via salvage pathway; S-methyl-5-thio-alpha-D-ribose 1-phosphate from S-methyl-5'-thioadenosine (hydrolase route): step 2/2. Functionally, catalyzes the phosphorylation of methylthioribose into methylthioribose-1-phosphate. The sequence is that of Methylthioribose kinase from Bacillus cereus (strain AH187).